A 603-amino-acid chain; its full sequence is NADH-quinone oxidoreductase subunit C/D (603 aa).

The NADH dehydrogenase I subunit C stretch occupies residues 1 to 193 (MVNNMTDLTA…DPFTLTKQKE (193 aa)). Residues 217-603 (DFMFLNLGPN…IDFVMSDVDR (387 aa)) are NADH dehydrogenase I subunit D.

It in the N-terminal section; belongs to the complex I 30 kDa subunit family. The protein in the C-terminal section; belongs to the complex I 49 kDa subunit family. As to quaternary structure, NDH-1 is composed of 13 different subunits. Subunits NuoB, CD, E, F, and G constitute the peripheral sector of the complex.

Its subcellular location is the cell inner membrane. The enzyme catalyses a quinone + NADH + 5 H(+)(in) = a quinol + NAD(+) + 4 H(+)(out). NDH-1 shuttles electrons from NADH, via FMN and iron-sulfur (Fe-S) centers, to quinones in the respiratory chain. The immediate electron acceptor for the enzyme in this species is believed to be ubiquinone. Couples the redox reaction to proton translocation (for every two electrons transferred, four hydrogen ions are translocated across the cytoplasmic membrane), and thus conserves the redox energy in a proton gradient. The protein is NADH-quinone oxidoreductase subunit C/D of Cronobacter sakazakii (strain ATCC BAA-894) (Enterobacter sakazakii).